The chain runs to 289 residues: Probable early E4 33 kDa protein (289 aa).

The protein belongs to the adenoviridae E4 30 to 34 kDa protein family. As to quaternary structure, interacts with E1B-55k.

It localises to the host nucleus. It is found in the host cytoplasm. In terms of biological role, plays a major role to prevent cellular inhibition of viral genome replication by nuclear bodies. Assembles an SCF-like E3 ubiquitin ligase complex based on the cellular proteins ELOB, ELOC, CUL5 and RBX1, in cooperation with viral E1B-55K. This viral RING-type ligase ubiquitinates cellular substrates prior to proteasomal degradation: p53/TP53, LIG4, MRE11-RAD50-NBS1 (MRN) complex, ITGA3, DAXX and BLM. The polypeptide is Probable early E4 33 kDa protein (Mus musculus (Mouse)).